The primary structure comprises 360 residues: Nucleoporin SEH1 (360 aa).

WD repeat units follow at residues 10-49 (DHKDLIHDVSFDFHGRRMATCSSDQSVKVWDKSENGDWHC), 55-96 (THSG…SNDK), 111-152 (DSRT…NLSQ), 160-210 (SCKL…RKYA), 217-258 (SVSD…KELS), and 276-315 (NHNSQVWRVSWNITGTVLASSGDDGTVRLWKANYMDNWKC).

The protein belongs to the WD repeat SEC13 family. As to quaternary structure, component of the Nup107-160 subcomplex of the nuclear pore complex (NPC). The Nup107-160 subcomplex includes NUP160, NUP133, NUP107, NUP98, NUP85, NUP43, NUP37, SEH1 and SEC13. Component of the GATOR2 subcomplex, composed of MIOS, SEC13, SEH1L, WDR24 and WDR59. The GATOR2 complex interacts with CASTOR1 and CASTOR2; the interaction is negatively regulated by arginine. The GATOR2 complex interacts with SESN1, SESN2 and SESN3; the interaction is negatively regulated by amino acids.

The protein resides in the chromosome. The protein localises to the centromere. Its subcellular location is the kinetochore. It localises to the nucleus. It is found in the nuclear pore complex. The protein resides in the lysosome membrane. Its activity is regulated as follows. The GATOR2 complex is negatively regulated by the upstream amino acid sensors CASTOR1 and SESN2, which sequester the GATOR2 complex in absence of amino acids. In the presence of abundant amino acids, GATOR2 is released from CASTOR1 and SESN2 and activated. Its function is as follows. Component of the Nup107-160 subcomplex of the nuclear pore complex (NPC). The Nup107-160 subcomplex is required for the assembly of a functional NPC. The Nup107-160 subcomplex is also required for normal kinetochore microtubule attachment, mitotic progression and chromosome segregation. This subunit plays a role in recruitment of the Nup107-160 subcomplex to the kinetochore. As a component of the GATOR2 complex, functions as an activator of the amino acid-sensing branch of the mTORC1 signaling pathway. The GATOR2 complex indirectly activates mTORC1 through the inhibition of the GATOR1 subcomplex. GATOR2 probably acts as an E3 ubiquitin-protein ligase toward GATOR1. In the presence of abundant amino acids, the GATOR2 complex mediates ubiquitination of the NPRL2 core component of the GATOR1 complex, leading to GATOR1 inactivation. In the absence of amino acids, GATOR2 is inhibited, activating the GATOR1 complex. The sequence is that of Nucleoporin SEH1 (seh1l) from Xenopus tropicalis (Western clawed frog).